The following is a 410-amino-acid chain: Trans-splicing factor Raa2, chloroplastic (410 aa).

Disordered regions lie at residues 1–40 and 56–106; these read MRTR…QRPA and AADH…QQQV. Residues 1 to 46 constitute a chloroplast transit peptide; sequence MRTRAGAFFGKQRSTSPSGSSTSASRQWLRSSPGRTQRPAAHRVLA. The span at 14–25 shows a compositional bias: low complexity; sequence STSPSGSSTSAS. Polar residues predominate over residues 26-35; sequence RQWLRSSPGR. Low complexity predominate over residues 96-106; the sequence is RQAQRRQQQQV.

Belongs to the pseudouridine synthase TruB family. As to quaternary structure, possibly associated with other factors required for trans-splicing.

The protein resides in the plastid. It is found in the chloroplast. In terms of biological role, required for trans-splicing of exons 2 and 3 of the chloroplast encoded psaA mRNA (a group II intron). It is not known if this protein has pseudouridine activity; mutation of the potential active site residue does not cause loss of trans-splicing. This is Trans-splicing factor Raa2, chloroplastic (RAA2) from Chlamydomonas reinhardtii (Chlamydomonas smithii).